A 308-amino-acid polypeptide reads, in one-letter code: Coenzyme PQQ synthesis protein B (308 aa).

Belongs to the PqqB family.

Its pathway is cofactor biosynthesis; pyrroloquinoline quinone biosynthesis. Its function is as follows. May be involved in the transport of PQQ or its precursor to the periplasm. The sequence is that of Coenzyme PQQ synthesis protein B from Rhodopseudomonas palustris (strain BisB5).